The following is a 273-amino-acid chain: Acetyl-coenzyme A carboxylase carboxyl transferase subunit alpha (273 aa).

The CoA carboxyltransferase C-terminal domain occupies M1–E244.

It belongs to the AccA family. As to quaternary structure, acetyl-CoA carboxylase is a heterohexamer composed of biotin carboxyl carrier protein (AccB), biotin carboxylase (AccC) and two subunits each of ACCase subunit alpha (AccA) and ACCase subunit beta (AccD).

It is found in the cytoplasm. The enzyme catalyses N(6)-carboxybiotinyl-L-lysyl-[protein] + acetyl-CoA = N(6)-biotinyl-L-lysyl-[protein] + malonyl-CoA. The protein operates within lipid metabolism; malonyl-CoA biosynthesis; malonyl-CoA from acetyl-CoA: step 1/1. Functionally, component of the acetyl coenzyme A carboxylase (ACC) complex. First, biotin carboxylase catalyzes the carboxylation of biotin on its carrier protein (BCCP) and then the CO(2) group is transferred by the carboxyltransferase to acetyl-CoA to form malonyl-CoA. This chain is Acetyl-coenzyme A carboxylase carboxyl transferase subunit alpha, found in Acinetobacter baumannii (strain ACICU).